A 243-amino-acid polypeptide reads, in one-letter code: MTTSRSKSEQKNVDPEEIAKFSALASRWWDPDGEFKPLHKINPVRLGFIENHTDGLFGKKVLDVGCGGGLLSEAMAERGAQVTGVDLAEQSLKVARLHALESGRQIDYQCIAIETLADQQPASFDVVTCLEMLEHVPDPKAIVKACAKALKPGGKIFFSTLNRNVKSWLLGIVAAEHVLGWVPKGTHQHQRFIKPSELLRMTDAAALEDIAINGLIFNPLKGFVLSEKDVDVNYIIALKKPES.

S-adenosyl-L-methionine contacts are provided by Arg-45, Gly-65, Asp-86, and Leu-130.

It belongs to the methyltransferase superfamily. UbiG/COQ3 family.

The catalysed reaction is a 3-demethylubiquinol + S-adenosyl-L-methionine = a ubiquinol + S-adenosyl-L-homocysteine + H(+). It carries out the reaction a 3-(all-trans-polyprenyl)benzene-1,2-diol + S-adenosyl-L-methionine = a 2-methoxy-6-(all-trans-polyprenyl)phenol + S-adenosyl-L-homocysteine + H(+). It functions in the pathway cofactor biosynthesis; ubiquinone biosynthesis. In terms of biological role, O-methyltransferase that catalyzes the 2 O-methylation steps in the ubiquinone biosynthetic pathway. This Idiomarina loihiensis (strain ATCC BAA-735 / DSM 15497 / L2-TR) protein is Ubiquinone biosynthesis O-methyltransferase.